The sequence spans 398 residues: Acetate kinase (398 aa).

Asn7 is a Mg(2+) binding site. Lys14 is a binding site for ATP. Residue Arg91 coordinates substrate. Catalysis depends on Asp148, which acts as the Proton donor/acceptor. Residues His208–Gly212, Asp283–Arg285, and Gly331–Asn335 each bind ATP. Glu384 serves as a coordination point for Mg(2+).

Belongs to the acetokinase family. Homodimer. It depends on Mg(2+) as a cofactor. The cofactor is Mn(2+).

The protein resides in the cytoplasm. The catalysed reaction is acetate + ATP = acetyl phosphate + ADP. It participates in metabolic intermediate biosynthesis; acetyl-CoA biosynthesis; acetyl-CoA from acetate: step 1/2. Its function is as follows. Catalyzes the formation of acetyl phosphate from acetate and ATP. Can also catalyze the reverse reaction. In Natranaerobius thermophilus (strain ATCC BAA-1301 / DSM 18059 / JW/NM-WN-LF), this protein is Acetate kinase.